Reading from the N-terminus, the 274-residue chain is MKNTDKKIAVFSNYKPQSKEVCQLLIKKLRQNRFILTDKNPDIVISVGGDGMLLSVFHKYEKQLDKVRFVGVHTGHLGFYTDYRDFEIDKLIDNLKLDTGAQVSYPILNVRIFLEDGSVKTKLALNEATIKRSDRTMVADVMINHVAFERFRGDGISVSTPTGSTAYNKSLGGAVLHPTIEALQIAEVASLNNRVYRTLGSSIIVPKKDKIEIFPTRNDQHTISVDNRTYTFKHIAKVEFQIDNHKIHFVASPSHTSFWNRVKDAFIGEVDDEI.

D50 acts as the Proton acceptor in catalysis. NAD(+) is bound by residues 50 to 51 (DG), 126 to 127 (NE), R152, D154, 165 to 170 (TAYNKS), and A189.

The protein belongs to the NAD kinase family. The cofactor is a divalent metal cation.

The protein resides in the cytoplasm. The catalysed reaction is NAD(+) + ATP = ADP + NADP(+) + H(+). Its function is as follows. Involved in the regulation of the intracellular balance of NAD and NADP, and is a key enzyme in the biosynthesis of NADP. Catalyzes specifically the phosphorylation on 2'-hydroxyl of the adenosine moiety of NAD to yield NADP. In Streptococcus gordonii (strain Challis / ATCC 35105 / BCRC 15272 / CH1 / DL1 / V288), this protein is NAD kinase.